The primary structure comprises 138 residues: Basic phospholipase A2 homolog Ts-K49a (138 aa).

Residues 1-16 (MRTLWIMAVLLLGVEG) form the signal peptide. Disulfide bonds link C42/C131, C44/C60, C59/C111, C65/C138, C66/C104, C73/C97, and C91/C102. The segment at 121–133 (KKKKINLKLFCKK) is important for membrane-damaging activities in eukaryotes and bacteria; heparin-binding.

As to expression, expressed by the venom gland.

The protein localises to the secreted. Its function is as follows. Snake venom phospholipase A2 homolog that lacks catalytic activity. It shows myotoxic and weak anticoagulant activities and induces local edema a few hours after injection (5-10 ug) in the hind paw. A model of myotoxic mechanism has been proposed: an apo Lys49-PLA2 is activated by the entrance of a hydrophobic molecule (e.g. fatty acid) at the hydrophobic channel of the protein leading to a reorientation of a monomer. This reorientation causes a transition between 'inactive' to 'active' states, causing alignment of C-terminal and membrane-docking sites (MDoS) side-by-side and putting the membrane-disruption sites (MDiS) in the same plane, exposed to solvent and in a symmetric position for both monomers. The MDoS region stabilizes the toxin on membrane by the interaction of charged residues with phospholipid head groups. Subsequently, the MDiS region destabilizes the membrane with penetration of hydrophobic residues. This insertion causes a disorganization of the membrane, allowing an uncontrolled influx of ions (i.e. calcium and sodium), and eventually triggering irreversible intracellular alterations and cell death. The chain is Basic phospholipase A2 homolog Ts-K49a from Trimeresurus stejnegeri (Chinese green tree viper).